Here is a 393-residue protein sequence, read N- to C-terminus: Histidinol dehydrogenase (393 aa).

3 residues coordinate NAD(+): Y112, Q171, and N194. Substrate is bound by residues T217, Q239, and H242. Zn(2+) is bound by residues Q239 and H242. Catalysis depends on proton acceptor residues E293 and H294. Substrate-binding residues include H294, D326, E379, and H384. D326 lines the Zn(2+) pocket. H384 lines the Zn(2+) pocket.

It belongs to the histidinol dehydrogenase family. The cofactor is Zn(2+).

The enzyme catalyses L-histidinol + 2 NAD(+) + H2O = L-histidine + 2 NADH + 3 H(+). It participates in amino-acid biosynthesis; L-histidine biosynthesis; L-histidine from 5-phospho-alpha-D-ribose 1-diphosphate: step 9/9. Its function is as follows. Catalyzes the sequential NAD-dependent oxidations of L-histidinol to L-histidinaldehyde and then to L-histidine. The sequence is that of Histidinol dehydrogenase from Sulfolobus acidocaldarius (strain ATCC 33909 / DSM 639 / JCM 8929 / NBRC 15157 / NCIMB 11770).